The primary structure comprises 206 residues: Ras-related protein RABG3c (206 aa).

Gly15–Thr22 is a GTP binding site. The Effector region signature appears at Tyr37 to Phe45. Residues Asp63–Gln67, Asn125–Asp128, and Ser158–Ala159 contribute to the GTP site. S-geranylgeranyl cysteine attachment occurs at residues Cys204 and Cys206. At Cys206 the chain carries Cysteine methyl ester.

Belongs to the small GTPase superfamily. Rab family.

The protein resides in the cell membrane. Intracellular vesicle trafficking and protein transport. This is Ras-related protein RABG3c (RABG3C) from Arabidopsis thaliana (Mouse-ear cress).